The following is a 335-amino-acid chain: Protein-glutamate methylesterase/protein-glutamine glutaminase 3 (335 aa).

In terms of domain architecture, Response regulatory spans 2-119 (RIGIVNDMPL…GNPQTAAAPL (118 aa)). A 4-aspartylphosphate modification is found at Asp53. The region spanning 144–335 (PKAGGARQRL…IAPRLAEVFD (192 aa)) is the CheB-type methylesterase domain. Residues Ser159, His186, and Asp279 contribute to the active site.

Belongs to the CheB family. In terms of processing, phosphorylated by CheA. Phosphorylation of the N-terminal regulatory domain activates the methylesterase activity.

The protein localises to the cytoplasm. The catalysed reaction is [protein]-L-glutamate 5-O-methyl ester + H2O = L-glutamyl-[protein] + methanol + H(+). It catalyses the reaction L-glutaminyl-[protein] + H2O = L-glutamyl-[protein] + NH4(+). Involved in chemotaxis. Part of a chemotaxis signal transduction system that modulates chemotaxis in response to various stimuli. Catalyzes the demethylation of specific methylglutamate residues introduced into the chemoreceptors (methyl-accepting chemotaxis proteins or MCP) by CheR. Also mediates the irreversible deamidation of specific glutamine residues to glutamic acid. In Pseudomonas aeruginosa (strain ATCC 15692 / DSM 22644 / CIP 104116 / JCM 14847 / LMG 12228 / 1C / PRS 101 / PAO1), this protein is Protein-glutamate methylesterase/protein-glutamine glutaminase 3.